Reading from the N-terminus, the 452-residue chain is 3-phosphoshikimate 1-carboxyvinyltransferase (452 aa).

Positions 1 to 23 (MLNGSASKPATARKSAGLTGSVR) are disordered. Positions 28, 29, and 33 each coordinate 3-phosphoshikimate. Lys-28 contacts phosphoenolpyruvate. Phosphoenolpyruvate is bound by residues Gly-100 and Arg-128. Residues Ser-173, Gln-175, Asp-326, and Lys-353 each coordinate 3-phosphoshikimate. Position 175 (Gln-175) interacts with phosphoenolpyruvate. Residue Asp-326 is the Proton acceptor of the active site. Positions 357 and 405 each coordinate phosphoenolpyruvate.

It belongs to the EPSP synthase family. As to quaternary structure, monomer.

It localises to the cytoplasm. The enzyme catalyses 3-phosphoshikimate + phosphoenolpyruvate = 5-O-(1-carboxyvinyl)-3-phosphoshikimate + phosphate. It participates in metabolic intermediate biosynthesis; chorismate biosynthesis; chorismate from D-erythrose 4-phosphate and phosphoenolpyruvate: step 6/7. In terms of biological role, catalyzes the transfer of the enolpyruvyl moiety of phosphoenolpyruvate (PEP) to the 5-hydroxyl of shikimate-3-phosphate (S3P) to produce enolpyruvyl shikimate-3-phosphate and inorganic phosphate. This chain is 3-phosphoshikimate 1-carboxyvinyltransferase, found in Rhizobium johnstonii (strain DSM 114642 / LMG 32736 / 3841) (Rhizobium leguminosarum bv. viciae).